Reading from the N-terminus, the 363-residue chain is GDSL esterase/lipase At2g24560 (363 aa).

A signal peptide spans Met-1–Ala-22. An N-linked (GlcNAc...) asparagine glycan is attached at Asn-25. The active-site Nucleophile is the Ser-41. Residues Asn-103 and Asn-325 are each glycosylated (N-linked (GlcNAc...) asparagine). Active-site residues include Asp-333 and His-336.

It belongs to the 'GDSL' lipolytic enzyme family.

It is found in the secreted. In Arabidopsis thaliana (Mouse-ear cress), this protein is GDSL esterase/lipase At2g24560.